The sequence spans 3262 residues: Striated muscle-specific serine/threonine-protein kinase (3262 aa).

Residues 1 to 33 (MQKARGTRGEDAGTRAPPSPGVPPKRAKVGAGR) form a disordered region. An Omega-N-methylarginine modification is found at R33. The region spanning 45–126 (PVFLRPLKNA…GQASCEAVLT (82 aa)) is the Ig-like 1 domain. S141 is modified (phosphoserine). Disordered stretches follow at residues 155–185 (RAFS…TSEE), 198–226 (EQEA…GPRH), 280–720 (GLHR…VSAG), and 814–875 (LAVR…APPT). Residues 158–185 (STPTGGSDTLVGTSLDTPPTSVTGTSEE) are compositionally biased toward polar residues. The segment covering 301-317 (PALPPPSKSALLPPPSP) has biased composition (pro residues). Residues S368 and S375 each carry the phosphoserine modification. T379 carries the post-translational modification Phosphothreonine. S382 and S385 each carry phosphoserine. The span at 404-422 (ILDKLQFFEERRRSLERSD) shows a compositional bias: basic and acidic residues. S423 carries the phosphoserine modification. Residue T453 is modified to Phosphothreonine. Phosphoserine occurs at positions 457, 463, 493, 511, and 531. A compositionally biased stretch (basic and acidic residues) spans 459–473 (EELRSPRGSVAERRR). The span at 510–522 (TSREELVRSHESL) shows a compositional bias: basic and acidic residues. The span at 543–552 (RPSTPKTSRA) shows a compositional bias: polar residues. Position 554 is a phosphoserine (S554). 2 stretches are compositionally biased toward basic and acidic residues: residues 624–638 (PESR…KREP) and 663–680 (EKNR…RGPE). The Ig-like 2 domain maps to 727 to 815 (PVFEIPLQNM…GQATCASSLA (89 aa)). The span at 820–830 (GSTSPFSSPIT) shows a compositional bias: polar residues. 3 consecutive Ig-like domains span residues 874-963 (PTFK…ARLE), 968-1062 (PESR…ARLT), and 1069-1157 (PLFT…AQLY). A disulfide bridge links C994 with C1046. Phosphoserine is present on residues S1133 and S1177. Positions 1162–1185 (RTAASGPSSKLEKMPSIPEEPEHG) are disordered. One can recognise an Ig-like 6 domain in the interval 1193-1283 (PDFLRPLQDL…AACYAHLYVT (91 aa)). The region spanning 1290–1387 (PDGAPEVVAV…PSEPVQLLEH (98 aa)) is the Fibronectin type-III 1 domain. Ig-like domains follow at residues 1389–1485 (PPLE…VTLE) and 1490–1578 (PRFE…AELS). The cysteines at positions 1413 and 1469 are disulfide-linked. The 254-residue stretch at 1606 to 1859 (YDIHQEIGRG…AEETLEHPWF (254 aa)) folds into the Protein kinase 1 domain. ATP-binding positions include 1612–1620 (IGRGAFSYL) and K1635. Residue D1724 is the Proton acceptor of the active site. Positions 1913-2571 (MPRRQPPSGG…SQPNLSSSVQ (659 aa)) are disordered. The segment covering 1918–1927 (PPSGGLSSSS) has biased composition (low complexity). Over residues 1980–1990 (EQERTPSKDQE) the composition is skewed to basic and acidic residues. S1993, S2004, S2019, S2020, and S2042 each carry phosphoserine. A compositionally biased stretch (basic and acidic residues) spans 2009-2019 (SPRRPELRRGS). An Asymmetric dimethylarginine; alternate modification is found at R2060. R2060 carries the omega-N-methylarginine; alternate modification. A compositionally biased stretch (low complexity) spans 2069-2081 (AQRLQALRQRLLR). A phosphoserine mark is found at S2114 and S2135. An Omega-N-methylarginine modification is found at R2144. The segment covering 2168 to 2179 (ESPSLSALSETQ) has biased composition (polar residues). 2 positions are modified to phosphoserine: S2182 and S2207. The span at 2193–2207 (ITKSPEPSAVTSRDS) shows a compositional bias: polar residues. Positions 2208 to 2218 (PQPPEPQPVPE) are enriched in pro residues. Positions 2219-2229 (KVPEPKPEPVR) are enriched in basic and acidic residues. Residues 2230 to 2268 (AAKPAQPPLALQMPTQPLTPYAQIMQSLQLSSPTLSPQD) are compositionally biased toward low complexity. Basic and acidic residues predominate over residues 2337 to 2348 (FEAKFKRSRESP). The span at 2349 to 2358 (LSRGLRLLSR) shows a compositional bias: low complexity. A compositionally biased stretch (basic and acidic residues) spans 2359–2375 (SRSEERGPFRGAEDDGI). At S2379 the chain carries Phosphoserine. At T2383 the chain carries Phosphothreonine. The span at 2387–2398 (LVRRPERSRSVQ) shows a compositional bias: basic and acidic residues. A phosphoserine mark is found at S2413, S2417, S2441, S2442, S2447, and S2451. Low complexity predominate over residues 2461 to 2487 (SSTLERLSSRLQRSGSSEDSGGASGRS). Positions 2513 to 2523 (QLGSQTGATTP) are enriched in polar residues. Phosphoserine is present on residues S2524 and S2527. A compositionally biased stretch (low complexity) spans 2524 to 2543 (SAESLGSEASGTSGSSAPGE). A compositionally biased stretch (basic residues) spans 2546–2557 (SRHRWGLSRLRK). Phosphoserine is present on S2562. The segment covering 2562 to 2571 (SQPNLSSSVQ) has biased composition (polar residues). In terms of domain architecture, Ig-like 9 spans 2586-2676 (PPVFHIKLKD…GSITSSCTVA (91 aa)). C2608 and C2660 are disulfide-bonded. The Fibronectin type-III 2 domain maps to 2683 to 2777 (KLAPPEVPQT…KVFIRGTPDS (95 aa)). Disordered regions lie at residues 2756-2832 (RAGQ…MSAN), 2857-2899 (ATQQ…PAPS), and 2912-2960 (APPA…PQKP). T2774 is subject to Phosphothreonine. Composition is skewed to low complexity over residues 2775–2789 (PDSP…RDAP) and 2803–2831 (PTSL…SMSA). Residue S2777 is modified to Phosphoserine. In terms of domain architecture, Fibronectin type-III 3 spans 2865–2968 (PPSIVVTPSE…KPYTFLEEKA (104 aa)). The segment covering 2883–2899 (GTLTPTSSPQGVKPAPS) has biased composition (polar residues). The span at 2913-2927 (PPAPQAPAPEPPPEP) shows a compositional bias: pro residues. Polar residues predominate over residues 2943 to 2953 (SSPTPESTTLR). Position 2944 is a phosphoserine (S2944). The region spanning 2946–3213 (TPESTTLRQG…LQDCLAHPWL (268 aa)) is the Protein kinase 2 domain. D3080 acts as the Proton acceptor in catalysis.

The protein belongs to the protein kinase superfamily. CAMK Ser/Thr protein kinase family. As to quaternary structure, interacts with MTM1. Isoform 3 is found as a monomer or homodimer. Post-translationally, may be autophosphorylated. As to expression, isoform 1 is preferentially expressed in striated muscle. Non-kinase form such as isoform 3 is predominantly expressed in the aorta. Isoform 3 appears to be expressed only in highly differentiated ASMC in normal vessel walls and down-regulated in dedifferentiated ASMC in vivo. In response to vascular injuries ASMC dedifferentiate and change from a quiescent and contractile phenotype to a proliferative and synthetic phenotype. This proliferation of vascular smooth muscle cells is one of the most prominent features of atherosclerosis. Isoform 1 and isoform 4 are expressed in cardiomyocytes of the developing heart.

It is found in the nucleus. The enzyme catalyses L-seryl-[protein] + ATP = O-phospho-L-seryl-[protein] + ADP + H(+). The catalysed reaction is L-threonyl-[protein] + ATP = O-phospho-L-threonyl-[protein] + ADP + H(+). Isoform 3 may have a role in regulating the growth and differentiation of arterial smooth muscle cells. This is Striated muscle-specific serine/threonine-protein kinase (Speg) from Mus musculus (Mouse).